A 614-amino-acid polypeptide reads, in one-letter code: uncharacterized protein (614 aa).

The disordered stretch occupies residues 23 to 68 (YPIPSHNGDGESEKNSSDSTSSKVNAKVTSSLQGAPSTNDENSVSP). Residues 49-68 (KVTSSLQGAPSTNDENSVSP) are compositionally biased toward polar residues.

It to C.trachomatis CT875.

This is an uncharacterized protein from Chlamydia muridarum (strain MoPn / Nigg).